Consider the following 285-residue polypeptide: NADH-dependent oxidoreductase ucdB (285 aa).

Residue Thr87 coordinates NAD(+). Lys156 is an active-site residue.

Belongs to the HIBADH-related family. NP60 subfamily.

It participates in secondary metabolite biosynthesis. In terms of biological role, nonribosomal peptide synthetase that mediates the biosynthesis of usterphenyllins and uscandidusins, p-terphenyl derivatives. Within the pathway, ucdB alone catalyzes both reduction and dehydration of atromentin to form a terphenyl triol intermediate. The pathway begin with the biosynthesis of 4-hydroxyphenylpyruvate (HPPA) from L-tyrosine, possibly by the aminotransferase ucdG. The nonribosomal peptide synthetase ucdA then condenses two HPPA units to produce atromentin. The key step in this pathway is the reduction and dehydration of atromentin to form a terphenyl triol intermediate, performed by the NAD-dependent dehydrogenase ucdB. Further O-methylation by the methyltransferase ucdC forms terphenyllin carrying two methoxy moieties at C-9 and C-12, and subsequent dihydroxylation at C-3 of ring A and C-15 of ring C by the flavin-dependent oxygenase ucdD leads to 3,15-dihydroxyterphenyllin. Prenylation by ucdE at position C-5 of ring A forms usterphenyllin B, and is followed by a second prenylation at position C-14 of ring C to form usterphenyllin A. The following furan ring formation that leads to uscandidusins A and B was proven to be an unexpected spontaneous non-enzymatic reaction. This is NADH-dependent oxidoreductase ucdB from Aspergillus ustus.